Here is a 179-residue protein sequence, read N- to C-terminus: Large ribosomal subunit protein uL5 (179 aa).

The protein belongs to the universal ribosomal protein uL5 family. As to quaternary structure, part of the 50S ribosomal subunit; part of the 5S rRNA/L5/L18/L25 subcomplex. Contacts the 5S rRNA and the P site tRNA. Forms a bridge to the 30S subunit in the 70S ribosome.

This is one of the proteins that bind and probably mediate the attachment of the 5S RNA into the large ribosomal subunit, where it forms part of the central protuberance. In the 70S ribosome it contacts protein S13 of the 30S subunit (bridge B1b), connecting the 2 subunits; this bridge is implicated in subunit movement. Contacts the P site tRNA; the 5S rRNA and some of its associated proteins might help stabilize positioning of ribosome-bound tRNAs. This Xylella fastidiosa (strain 9a5c) protein is Large ribosomal subunit protein uL5.